We begin with the raw amino-acid sequence, 328 residues long: Malate dehydrogenase (328 aa).

G11–G17 contacts NAD(+). Substrate is bound by residues R92 and R98. Residues N105, Q112, and T129–N131 each bind NAD(+). Substrate-binding residues include N131 and R162. H187 (proton acceptor) is an active-site residue.

It belongs to the LDH/MDH superfamily. MDH type 2 family.

It carries out the reaction (S)-malate + NAD(+) = oxaloacetate + NADH + H(+). Catalyzes the reversible oxidation of malate to oxaloacetate. In Paenarthrobacter aurescens (strain TC1), this protein is Malate dehydrogenase.